A 290-amino-acid polypeptide reads, in one-letter code: 4-hydroxy-3-methylbut-2-enyl diphosphate reductase (290 aa).

Residue C12 coordinates [4Fe-4S] cluster. (2E)-4-hydroxy-3-methylbut-2-enyl diphosphate is bound by residues H50 and H83. Dimethylallyl diphosphate is bound by residues H50 and H83. Isopentenyl diphosphate-binding residues include H50 and H83. C105 contributes to the [4Fe-4S] cluster binding site. Position 133 (H133) interacts with (2E)-4-hydroxy-3-methylbut-2-enyl diphosphate. H133 serves as a coordination point for dimethylallyl diphosphate. H133 is an isopentenyl diphosphate binding site. E135 serves as the catalytic Proton donor. A (2E)-4-hydroxy-3-methylbut-2-enyl diphosphate-binding site is contributed by T173. C202 serves as a coordination point for [4Fe-4S] cluster. Positions 230, 232, and 274 each coordinate (2E)-4-hydroxy-3-methylbut-2-enyl diphosphate. Dimethylallyl diphosphate is bound by residues S230, N232, and S274. 3 residues coordinate isopentenyl diphosphate: S230, N232, and S274.

It belongs to the IspH family. The cofactor is [4Fe-4S] cluster.

It catalyses the reaction isopentenyl diphosphate + 2 oxidized [2Fe-2S]-[ferredoxin] + H2O = (2E)-4-hydroxy-3-methylbut-2-enyl diphosphate + 2 reduced [2Fe-2S]-[ferredoxin] + 2 H(+). The enzyme catalyses dimethylallyl diphosphate + 2 oxidized [2Fe-2S]-[ferredoxin] + H2O = (2E)-4-hydroxy-3-methylbut-2-enyl diphosphate + 2 reduced [2Fe-2S]-[ferredoxin] + 2 H(+). Its pathway is isoprenoid biosynthesis; dimethylallyl diphosphate biosynthesis; dimethylallyl diphosphate from (2E)-4-hydroxy-3-methylbutenyl diphosphate: step 1/1. It functions in the pathway isoprenoid biosynthesis; isopentenyl diphosphate biosynthesis via DXP pathway; isopentenyl diphosphate from 1-deoxy-D-xylulose 5-phosphate: step 6/6. Functionally, catalyzes the conversion of 1-hydroxy-2-methyl-2-(E)-butenyl 4-diphosphate (HMBPP) into a mixture of isopentenyl diphosphate (IPP) and dimethylallyl diphosphate (DMAPP). Acts in the terminal step of the DOXP/MEP pathway for isoprenoid precursor biosynthesis. The chain is 4-hydroxy-3-methylbut-2-enyl diphosphate reductase from Nitratidesulfovibrio vulgaris (strain DP4) (Desulfovibrio vulgaris).